Here is an 801-residue protein sequence, read N- to C-terminus: Protocadherin beta-8 (801 aa).

The first 29 residues, 1 to 29 (MEASGKLICRQRQVLFSFLLLGLSLAGAA), serve as a signal peptide directing secretion. The Extracellular segment spans residues 30–691 (EPRSYSVVEE…GQADSLTVYL (662 aa)). Cadherin domains are found at residues 36 to 134 (VVEE…SPVF), 139 to 243 (MLVK…APEF), 248 to 348 (YRVQ…APEV), 353 to 452 (FTSP…APAF), and 457 to 562 (YTLF…SPFV). An intrachain disulfide couples cysteine 97 to cysteine 103. N-linked (GlcNAc...) asparagine glycans are attached at residues asparagine 419 and asparagine 437. A glycan (N-linked (GlcNAc...) asparagine) is linked at asparagine 568. The region spanning 569–672 (GSAPCTELVP…LVDGFSQPYL (104 aa)) is the Cadherin 6 domain. A helical transmembrane segment spans residues 692–710 (VVALASVSSLFLFSVLLFV). The Cytoplasmic portion of the chain corresponds to 711–801 (AVLLCRRSRA…NGFGFSLQLK (91 aa)).

In terms of assembly, forms homodimers in trans (molecules expressed by two different cells). Forms promiscuous heterodimers in cis (at the plasma membrane of the same cell) with other protocadherins.

Its subcellular location is the cell membrane. Functionally, calcium-dependent cell-adhesion protein involved in cells self-recognition and non-self discrimination. Thereby, it is involved in the establishment and maintenance of specific neuronal connections in the brain. The chain is Protocadherin beta-8 from Homo sapiens (Human).